The sequence spans 479 residues: Kynurenine 3-monooxygenase (479 aa).

FAD contacts are provided by residues Val-19, 37 to 40, and Ala-57; that span reads YEAR. The L-kynurenine site is built by Arg-85 and Tyr-99. FAD contacts are provided by residues Arg-111, Leu-136, Thr-172, Asp-304, and 317–318; that span reads MN. L-kynurenine-binding residues include Asn-363 and Tyr-398. The next 2 helical transmembrane spans lie at 385–404 and 425–445; these read FLHA…VAFT and GLFV…VHHL.

Belongs to the aromatic-ring hydroxylase family. KMO subfamily. FAD is required as a cofactor. Expressed by organs containing secondary lymphoid tissue, such as the lung, spleen, mesenteric lymph node, thymus and peripheral lymph nodes.

It localises to the mitochondrion outer membrane. The enzyme catalyses L-kynurenine + NADPH + O2 + H(+) = 3-hydroxy-L-kynurenine + NADP(+) + H2O. The protein operates within cofactor biosynthesis; NAD(+) biosynthesis; quinolinate from L-kynurenine: step 1/3. Its function is as follows. Catalyzes the hydroxylation of L-kynurenine (L-Kyn) to form 3-hydroxy-L-kynurenine (L-3OHKyn). Required for synthesis of quinolinic acid, a neurotoxic NMDA receptor antagonist and potential endogenous inhibitor of NMDA receptor signaling in axonal targeting, synaptogenesis and apoptosis during brain development. Quinolinic acid may also affect NMDA receptor signaling in pancreatic beta cells, osteoblasts, myocardial cells, and the gastrointestinal tract. This Mus musculus (Mouse) protein is Kynurenine 3-monooxygenase.